Consider the following 348-residue polypeptide: Uroporphyrinogen decarboxylase (348 aa).

Substrate contacts are provided by residues 27-31 (RQAGR), F46, D76, Y152, S207, and H320.

Belongs to the uroporphyrinogen decarboxylase family. In terms of assembly, homodimer.

The protein localises to the cytoplasm. It carries out the reaction uroporphyrinogen III + 4 H(+) = coproporphyrinogen III + 4 CO2. The protein operates within porphyrin-containing compound metabolism; protoporphyrin-IX biosynthesis; coproporphyrinogen-III from 5-aminolevulinate: step 4/4. In terms of biological role, catalyzes the decarboxylation of four acetate groups of uroporphyrinogen-III to yield coproporphyrinogen-III. This is Uroporphyrinogen decarboxylase from Bacillus anthracis.